Reading from the N-terminus, the 1272-residue chain is Protein diaphanous homolog 1 (1272 aa).

Methionine 1 bears the N-acetylmethionine mark. The segment covering 1–12 (MEPPGGSLGPGR) has biased composition (gly residues). The segment at 1 to 84 (MEPPGGSLGP…YGDDPTAQSL (84 aa)) is disordered. A phosphoserine mark is found at serine 7, serine 22, and serine 36. Residues 44–65 (LMADELERFTSMRIKKEKEKPN) are compositionally biased toward basic and acidic residues. A compositionally biased stretch (polar residues) spans 67-84 (AHRNSSASYGDDPTAQSL). A GBD/FH3 domain is found at 84-449 (LQDVSDEQVL…QIVLHKNGAD (366 aa)). Residues 468-572 (MIDKTKVEKS…ASLSAAAITV (105 aa)) are a coiled coil. Residues 573-755 (PPSVPSRAPV…GMPPPPPFGF (183 aa)) are disordered. 3 stretches are compositionally biased toward pro residues: residues 574–589 (PSVPSRAPVPPAPPLP), 596–622 (IPPPPAPGDSTTPPPPPPPPPPPPPLP), and 640–658 (SPPPPLSGDATIPPPPPLP). An FH1 domain is found at 583–764 (PPAPPLPGDS…FGVPAAPVLP (182 aa)). A compositionally biased stretch (low complexity) spans 659 to 674 (EGVGIPSPSSLPGGTA). A compositionally biased stretch (pro residues) spans 675-753 (IPPPPPLPGS…GMGMPPPPPF (79 aa)). Threonine 768 carries the phosphothreonine modification. The FH2 domain occupies 769-1171 (PKKLYKPEVQ…MRRAKLAKEK (403 aa)). A coiled-coil region spans residues 1039 to 1196 (DELAHVEKAS…IDMNAEGDET (158 aa)). N6-acetyllysine is present on residues lysine 1057 and lysine 1103. At tyrosine 1121 the chain carries Phosphotyrosine. Residues 1194-1222 (DETGVMDSLLEALQSGAAFRRKRGPRQAN) form the DAD domain. Phosphoserine is present on residues serine 1251 and serine 1254.

The protein belongs to the formin homology family. Diaphanous subfamily. As to quaternary structure, homodimer. Interacts with the GTP-bound form of RHOA. Interacts with RHOC, PFY1, MAPRE1 and BAIAP2. Interacts with APC; acts as a scaffold protein for MAPRE1 and APC to stabilize microtubules and promote cell migration. Interacts with SCAI. Interacts with DCAF7, via FH2 domain. Interacts with NCDN. Interacts with OSBPL10, OSBPL2, VIM, TUBB and DYN1. Phosphorylation at Thr-768 is stimulated by cAMP and regulates stability, complex formation and mitochondrial movement. Expressed in brain, heart, placenta, lung, kidney, pancreas, liver, skeletal muscle and cochlea. Expressed in platelets.

It is found in the cell membrane. It localises to the cell projection. The protein localises to the ruffle membrane. The protein resides in the cytoplasm. Its subcellular location is the cytoskeleton. It is found in the microtubule organizing center. It localises to the centrosome. The protein localises to the spindle. The protein resides in the nucleus. Actin nucleation and elongation factor required for the assembly of F-actin structures, such as actin cables and stress fibers. Binds to the barbed end of the actin filament and slows down actin polymerization and depolymerization. Required for cytokinesis, and transcriptional activation of the serum response factor. DFR proteins couple Rho and Src tyrosine kinase during signaling and the regulation of actin dynamics. Functions as a scaffold protein for MAPRE1 and APC to stabilize microtubules and promote cell migration. Has neurite outgrowth promoting activity. Acts in a Rho-dependent manner to recruit PFY1 to the membrane. In hear cells, it may play a role in the regulation of actin polymerization in hair cells. The MEMO1-RHOA-DIAPH1 signaling pathway plays an important role in ERBB2-dependent stabilization of microtubules at the cell cortex. It controls the localization of APC and CLASP2 to the cell membrane, via the regulation of GSK3B activity. In turn, membrane-bound APC allows the localization of the MACF1 to the cell membrane, which is required for microtubule capture and stabilization. Plays a role in the regulation of cell morphology and cytoskeletal organization. Required in the control of cell shape. Plays a role in brain development. Also acts as an actin nucleation and elongation factor in the nucleus by promoting nuclear actin polymerization inside the nucleus to drive serum-dependent SRF-MRTFA activity. In Homo sapiens (Human), this protein is Protein diaphanous homolog 1 (DIAPH1).